The chain runs to 225 residues: UPF0128 protein PH1314 (225 aa).

This sequence belongs to the UPF0128 family.

The protein is UPF0128 protein PH1314 of Pyrococcus horikoshii (strain ATCC 700860 / DSM 12428 / JCM 9974 / NBRC 100139 / OT-3).